The following is a 381-amino-acid chain: Alkanesulfonate monooxygenase (381 aa).

It belongs to the SsuD family. As to quaternary structure, homotetramer.

It catalyses the reaction an alkanesulfonate + FMNH2 + O2 = an aldehyde + FMN + sulfite + H2O + 2 H(+). Catalyzes the desulfonation of aliphatic sulfonates. The sequence is that of Alkanesulfonate monooxygenase from Escherichia coli O17:K52:H18 (strain UMN026 / ExPEC).